Consider the following 310-residue polypeptide: Olfactory receptor 5P56 (310 aa).

The Extracellular segment spans residues 1–25 (MEAQNHTTVKEFILLGLTENSTLRV). 2 N-linked (GlcNAc...) asparagine glycosylation sites follow: asparagine 5 and asparagine 20. Residues 26–46 (ILFMIFLGIYTVTLVGNFSII) form a helical membrane-spanning segment. Topologically, residues 47–54 (SLIRSCPQ) are cytoplasmic. A helical membrane pass occupies residues 55–75 (LHTPMYLFLSHLALVDIGFST). The Extracellular portion of the chain corresponds to 76 to 99 (SITPIMLTGFLGHTVTLSVAACVA). Cysteine 97 and cysteine 189 are oxidised to a cystine. A helical transmembrane segment spans residues 100–120 (QFCIAVTFGTVECFLLAVMAY). Residues 121–133 (DRYVAICSPLLYS) are Cytoplasmic-facing. Residues 134–154 (THMSPRICFLLVGASYVGGCV) form a helical membrane-spanning segment. At 155-196 (NSGTFTSCLLILSFCGPNQIDHFFCDFPAVLKLSCSDVSIIG) the chain is on the extracellular side. The helical transmembrane segment at 197–217 (IIPSISAGSIIVITVFVIAVS) threads the bilayer. The Cytoplasmic segment spans residues 218–237 (YTYILITILNMRSTEGRHKA). A helical membrane pass occupies residues 238-258 (FSTCTSHLTAVTLYYGTITFI). The Extracellular portion of the chain corresponds to 259-271 (YVMPKSNYSTAQN). N-linked (GlcNAc...) asparagine glycosylation occurs at asparagine 265. The chain crosses the membrane as a helical span at residues 272 to 292 (KILSVFYTVVIPMLNPLIYSL). At 293 to 310 (RNRDVKEALRKAIIRIFP) the chain is on the cytoplasmic side.

Belongs to the G-protein coupled receptor 1 family.

It localises to the cell membrane. Potential odorant receptor. This chain is Olfactory receptor 5P56, found in Mus musculus (Mouse).